The chain runs to 228 residues: Small ribosomal subunit protein uS10m (228 aa).

The transit peptide at 1 to 17 (MKRYMFGTLPRVQPKRC) directs the protein to the mitochondrion.

This sequence belongs to the universal ribosomal protein uS10 family. Component of the mitochondrial small ribosomal subunit (mt-SSU). Mature yeast 74S mitochondrial ribosomes consist of a small (37S) and a large (54S) subunit. The 37S small subunit contains a 15S ribosomal RNA (15S mt-rRNA) and at least 32 different proteins. The 54S large subunit contains a 21S rRNA (21S mt-rRNA) and at least 45 different proteins.

It localises to the mitochondrion. In terms of biological role, component of the mitochondrial ribosome (mitoribosome), a dedicated translation machinery responsible for the synthesis of mitochondrial genome-encoded proteins, including at least some of the essential transmembrane subunits of the mitochondrial respiratory chain. The mitoribosomes are attached to the mitochondrial inner membrane and translation products are cotranslationally integrated into the membrane. This Schizosaccharomyces pombe (strain 972 / ATCC 24843) (Fission yeast) protein is Small ribosomal subunit protein uS10m (rsm10).